A 701-amino-acid polypeptide reads, in one-letter code: Elongation factor G (701 aa).

Positions 8 to 291 constitute a tr-type G domain; it reads SRYRNIGIVA…AVIDFLPAPT (284 aa). GTP is bound by residues 17–24, 89–93, and 143–146; these read AHVDAGKT, DTPGH, and NKMD.

Belongs to the TRAFAC class translation factor GTPase superfamily. Classic translation factor GTPase family. EF-G/EF-2 subfamily.

The protein localises to the cytoplasm. In terms of biological role, catalyzes the GTP-dependent ribosomal translocation step during translation elongation. During this step, the ribosome changes from the pre-translocational (PRE) to the post-translocational (POST) state as the newly formed A-site-bound peptidyl-tRNA and P-site-bound deacylated tRNA move to the P and E sites, respectively. Catalyzes the coordinated movement of the two tRNA molecules, the mRNA and conformational changes in the ribosome. The sequence is that of Elongation factor G from Pseudomonas fluorescens (strain Pf0-1).